A 197-amino-acid polypeptide reads, in one-letter code: Dephospho-CoA kinase (197 aa).

The DPCK domain occupies Ile3–Arg197. Ala11 to Thr16 contributes to the ATP binding site.

This sequence belongs to the CoaE family.

The protein resides in the cytoplasm. It catalyses the reaction 3'-dephospho-CoA + ATP = ADP + CoA + H(+). The protein operates within cofactor biosynthesis; coenzyme A biosynthesis; CoA from (R)-pantothenate: step 5/5. Catalyzes the phosphorylation of the 3'-hydroxyl group of dephosphocoenzyme A to form coenzyme A. This chain is Dephospho-CoA kinase, found in Zymomonas mobilis subsp. mobilis (strain ATCC 31821 / ZM4 / CP4).